A 446-amino-acid chain; its full sequence is MNSQVLVSRPLAPQSVPAVSLPVQSAQVAQNTGPHSSSGLATAGFRTAKYLHEEWQQGNLTTFYQAFSDRDQSEKGRHESKQLVAETEARAQRSQADCTKSLGERLLDIHFWKSELSREIRDVGAETQLLVQQKVRLERALDATDIPFTIATDNLKCRDRRRGSELVRDDVEMQLLKEVDLIRNVQELLKRTLDQAAQQIRQNRDAKEALEMDYSDKAEAYEFDDKCGRYNNQSTDIQFHLNSSKYEDNTSTPESWAQYTHENIYKAERERMASINLRSLIDSILQDISEDLQAQFDAIAVDFEKRCRELEDAKQKLEMHLKKTLEEIGGQEKNIAALKQAINDKSPPLKVAQTRLHERSYRPNVELCRDHVQIRLVSEVGELTDSFDALKLKLEESEQSLRNLEDTRMSLEKDIANKANSIFIDREKCMTHRTRYPHGMKLLGYQ.

3 coiled-coil regions span residues 182–215, 297–346, and 378–422; these read IRNV…MDYS, DAIA…NDKS, and SEVG…ANSI.

The protein belongs to the tektin family.

It localises to the cytoplasm. The protein localises to the cytoskeleton. The protein resides in the cilium axoneme. It is found in the cell projection. Its subcellular location is the cilium. It localises to the flagellum. Its function is as follows. Microtubule inner protein (MIP) part of the dynein-decorated doublet microtubules (DMTs) in cilia and flagellar axoneme. Forms filamentous polymers in the walls of ciliary and flagellar microtubules. Contributes to normal sperm motility. This Xenopus laevis (African clawed frog) protein is Tektin-4 (tekt4).